The chain runs to 398 residues: Succinyl-diaminopimelate desuccinylase (398 aa).

A Zn(2+)-binding site is contributed by H73. Residue D75 is part of the active site. D106 lines the Zn(2+) pocket. The Proton acceptor role is filled by E140. The Zn(2+) site is built by E141, E169, and H366.

It belongs to the peptidase M20A family. DapE subfamily. As to quaternary structure, homodimer. Requires Zn(2+) as cofactor. The cofactor is Co(2+).

It carries out the reaction N-succinyl-(2S,6S)-2,6-diaminopimelate + H2O = (2S,6S)-2,6-diaminopimelate + succinate. Its pathway is amino-acid biosynthesis; L-lysine biosynthesis via DAP pathway; LL-2,6-diaminopimelate from (S)-tetrahydrodipicolinate (succinylase route): step 3/3. Catalyzes the hydrolysis of N-succinyl-L,L-diaminopimelic acid (SDAP), forming succinate and LL-2,6-diaminopimelate (DAP), an intermediate involved in the bacterial biosynthesis of lysine and meso-diaminopimelic acid, an essential component of bacterial cell walls. This Agrobacterium fabrum (strain C58 / ATCC 33970) (Agrobacterium tumefaciens (strain C58)) protein is Succinyl-diaminopimelate desuccinylase.